A 185-amino-acid chain; its full sequence is Large ribosomal subunit protein uL22 (185 aa).

The segment at 158–185 is disordered; that stretch reads AKPREDEPHKKKISKKKLARAKEKMLRE. Residues 167-176 show a composition bias toward basic residues; it reads KKKISKKKLA.

Belongs to the universal ribosomal protein uL22 family.

This chain is Large ribosomal subunit protein uL22 (RpL17), found in Diaphorina citri (Asian citrus psyllid).